Here is a 230-residue protein sequence, read N- to C-terminus: Large ribosomal subunit protein uL1 (230 aa).

This sequence belongs to the universal ribosomal protein uL1 family. In terms of assembly, part of the 50S ribosomal subunit.

Its function is as follows. Binds directly to 23S rRNA. The L1 stalk is quite mobile in the ribosome, and is involved in E site tRNA release. In terms of biological role, protein L1 is also a translational repressor protein, it controls the translation of the L11 operon by binding to its mRNA. The polypeptide is Large ribosomal subunit protein uL1 (Nitrobacter hamburgensis (strain DSM 10229 / NCIMB 13809 / X14)).